Here is a 365-residue protein sequence, read N- to C-terminus: Patr class I histocompatibility antigen, A-2 alpha chain (365 aa).

The signal sequence occupies residues 1–24; sequence MAVMPPRTLLLLLSGALALTQTWA. The segment at 25-114 is alpha-1; that stretch reads GSHSMRYFFT…LRGYYNQSED (90 aa). At 25–308 the chain is on the extracellular side; that stretch reads GSHSMRYFFT…EPSSQPTIPI (284 aa). Residue Asn-110 is glycosylated (N-linked (GlcNAc...) asparagine). Positions 115–206 are alpha-2; that stretch reads GSHTIQIMYG…ENGKETLQRT (92 aa). Intrachain disulfides connect Cys-125/Cys-188 and Cys-227/Cys-283. The segment at 207–298 is alpha-3; sequence DPPKTHMTHH…GLPKPLTLRW (92 aa). The Ig-like C1-type domain maps to 209-295; it reads PKTHMTHHPI…QHEGLPKPLT (87 aa). The tract at residues 299–308 is connecting peptide; it reads EPSSQPTIPI. The helical transmembrane segment at 309 to 332 threads the bilayer; it reads VGIIAGLVLLGAVITGAVVAAVMW. At 333 to 365 the chain is on the cytoplasmic side; the sequence is RRKSSDRKGGSYTQAASSDSAQGSDVSLTACKV. The interval 339-360 is disordered; it reads RKGGSYTQAASSDSAQGSDVSL. Ser-343 bears the Phosphoserine mark. Phosphotyrosine is present on Tyr-344. Low complexity predominate over residues 346-359; sequence QAASSDSAQGSDVS. Phosphoserine occurs at positions 349, 350, 352, 356, and 359.

This sequence belongs to the MHC class I family. In terms of assembly, heterodimer of an alpha chain and a beta chain (beta-2-microglobulin).

The protein resides in the membrane. Functionally, involved in the presentation of foreign antigens to the immune system. This is Patr class I histocompatibility antigen, A-2 alpha chain from Pan troglodytes (Chimpanzee).